Reading from the N-terminus, the 383-residue chain is DNA dC-&gt;dU-editing enzyme APOBEC-3G (383 aa).

Positions 1-60 (MKPHFRNTVERMYRGTFFYNFNNRPILSRRNTVWLCYEVKTRGPSMPTWGAKIFRGQLYP) are essential for cytoplasmic localization. CMP/dCMP-type deaminase domains lie at 29–138 (RRNT…LRIL) and 214–327 (GQRE…LRTL). Position 32 is a phosphothreonine; by PKA (Thr32). Positions 65, 97, and 100 each coordinate Zn(2+). Positions 209 to 335 (KPWVSGQRET…TLHRDGAKIA (127 aa)) are necessary for homooligomerization. The interaction with DNA stretch occupies residues 213 to 215 (SGQ). At Thr218 the chain carries Phosphothreonine; by PKA and CAMK2. His257 is a Zn(2+) binding site. The Proton donor role is filled by Glu259. The Zn(2+) site is built by Cys287 and Cys290. Residues 312–319 (RIYDDQGR) form an interaction with DNA region.

It belongs to the cytidine and deoxycytidylate deaminase family. In terms of assembly, homodimer. Homooligomer. Can bind RNA to form ribonucleoprotein complexes of high-molecular-mass (HMM) or low-molecular-mass (LMM). HMM is inactive and heterogeneous in protein composition because of binding nonselectively to cellular RNAs, which in turn are associated with variety of cellular proteins. The LMM form which is enzymatically active has few or no RNAs associated. Its ability to form homooligomer is distinct from its ability to assemble into HMM. Interacts with APOBEC3B, APOBEC3F, MOV10, AGO2, EIF4E, EIF4ENIF1, DCP2 and DDX6 in an RNA-dependent manner. Interacts with AGO1, AGO3 and PKA/PRKACA. Requires Zn(2+) as cofactor.

The protein localises to the cytoplasm. The protein resides in the nucleus. It is found in the P-body. It carries out the reaction a 2'-deoxycytidine in single-stranded DNA + H2O + H(+) = a 2'-deoxyuridine in single-stranded DNA + NH4(+). Its function is as follows. DNA deaminase (cytidine deaminase) which acts as an inhibitor of retrovirus replication and retrotransposon mobility. After the penetration of retroviral nucleocapsids into target cells of infection and the initiation of reverse transcription, it can induce the conversion of cytosine to uracil in the minus-sense single-strand viral DNA, leading to G-to-A hypermutations in the subsequent plus-strand viral DNA. The resultant detrimental levels of mutations in the proviral genome, along with a deamination-independent mechanism that works prior to the proviral integration, together exert efficient antiretroviral effects in infected target cells. Selectively targets single-stranded DNA and does not deaminate double-stranded DNA or single- or double-stranded RNA. This is DNA dC-&gt;dU-editing enzyme APOBEC-3G (APOBEC3G) from Erythrocebus patas (Red guenon).